Consider the following 94-residue polypeptide: ESAT-6-like protein EsxL (94 aa).

The protein belongs to the WXG100 family. ESAT-6 subfamily. Strongly interacts with EsxK to form a heterodimeric complex under reducing conditions.

It is found in the secreted. This chain is ESAT-6-like protein EsxL, found in Mycobacterium tuberculosis (strain CDC 1551 / Oshkosh).